The primary structure comprises 309 residues: Homoserine O-succinyltransferase (309 aa).

Residue Cys142 is the Acyl-thioester intermediate of the active site. 2 residues coordinate substrate: Lys163 and Ser192. The active-site Proton acceptor is the His235. Glu237 is an active-site residue. Arg249 is a substrate binding site.

This sequence belongs to the MetA family.

It localises to the cytoplasm. It carries out the reaction L-homoserine + succinyl-CoA = O-succinyl-L-homoserine + CoA. The protein operates within amino-acid biosynthesis; L-methionine biosynthesis via de novo pathway; O-succinyl-L-homoserine from L-homoserine: step 1/1. Functionally, transfers a succinyl group from succinyl-CoA to L-homoserine, forming succinyl-L-homoserine. The polypeptide is Homoserine O-succinyltransferase (Yersinia pseudotuberculosis serotype O:1b (strain IP 31758)).